A 472-amino-acid chain; its full sequence is MVNLVIVSHSSRLGEGVGELARQMLMSDSCKIAIAAGIDDPQNPIGTDAVKVMEAIESVADADHVLVMMDMGSALLSAETALELLAPEIAAKVRLCAAPLVEGTLAATVSAASGADIDKVIFDAMHALEAKREQLGLPSSDTEISDTCPAYDEEARSLAVVIKNRNGLHVRPASRLVYTLSTFNADMLLEKNGKCVTPESINQIALLQVRYNDTLRLIAKGPEAEEALIAFRQLAEDNFGETEEVAPPTLRPVPPVSGKAFYYQPVLCTVQAKSTLTVEEEQDRLRQAIDFTLLDLMTLTAKAEASGLDDIAAIFSGHHTLLDDPELLAAASELLQHEHCTAEYAWQQVLKELSQQYQQLDDEYLQARYIDVDDLLHRTLVHLTQTKEELPQFNSPTILLAENIYPSTVLQLDPAVVKGICLSAGSPVSHSALIARELGIGWICQQGEKLYAIQPEETLTLDVKTQRFNRQG.

The 135-residue stretch at 1 to 135 (MVNLVIVSHS…HALEAKREQL (135 aa)) folds into the PTS EIIA type-4 domain. Residue His-9 is the Tele-phosphohistidine intermediate of the active site. Positions 155-242 (ARSLAVVIKN…QLAEDNFGET (88 aa)) constitute an HPr domain. His-169 functions as the Pros-phosphohistidine intermediate in the catalytic mechanism. The tract at residues 264–472 (QPVLCTVQAK…VKTQRFNRQG (209 aa)) is PTS EI-like, N-terminal part. The active-site Tele-phosphohistidine intermediate is His-430.

The protein belongs to the PEP-utilizing enzyme family. In terms of assembly, homodimer. The dihydroxyacetone kinase complex is composed of a homodimer of DhaM, a homodimer of DhaK and the subunit DhaL.

The enzyme catalyses dihydroxyacetone + phosphoenolpyruvate = dihydroxyacetone phosphate + pyruvate. It functions in the pathway polyol metabolism; glycerol degradation. In terms of biological role, component of the dihydroxyacetone kinase complex, which is responsible for the phosphoenolpyruvate (PEP)-dependent phosphorylation of dihydroxyacetone. DhaM serves as the phosphoryl donor. Is phosphorylated by phosphoenolpyruvate in an EI- and HPr-dependent reaction, and a phosphorelay system on histidine residues finally leads to phosphoryl transfer to DhaL and dihydroxyacetone. The chain is PEP-dependent dihydroxyacetone kinase, phosphoryl donor subunit DhaM from Escherichia coli (strain K12).